Reading from the N-terminus, the 75-residue chain is MYB-like transcription factor ETC3 (75 aa).

Residues 1 to 20 form a disordered region; it reads MDNHRRTKQPKTNSIVTSSS. Positions 34–71 constitute a Myb-like domain; that stretch reads SQEEEDLVSRMHKLVGDRWELIAGRIPGRTAGEIERFW.

Expressed in leaf epidermal cells, stomate guard cells in leaves, cotyledons and hypocotyls, inflorescences, developing seeds and siliques.

It localises to the nucleus. MYB-type transcription factor involved in epidermal cell fate specification. Acts as a negative regulator of trichome development, including endoreplication, by mediating lateral inhibition. Promotes the formation of hair developing cells in H position in root epidermis, probably by inhibiting non-hair cell formation. May have pleiotropic effects on flowering development and epidermal cell size through the regulation of endoreduplication. This chain is MYB-like transcription factor ETC3 (ETC3), found in Arabidopsis thaliana (Mouse-ear cress).